Here is a 780-residue protein sequence, read N- to C-terminus: Oocyte zinc finger protein XlCOF8.4 (780 aa).

15 C2H2-type zinc fingers span residues 250–272 (FPCSECGKCFAGSSELNVHRRTH), 278–300 (FSCSQCGKCFSNQTKLKYHHRTH), 306–328 (FSCSECGKCFSTPHVRARHQKTH), 334–356 (FPCSECGKCFARSSDVTVHRRTH), 362–384 (YSCSQCGKCFTRSSDLNVHRRTH), 390–412 (YSCSHCGKCFTTSSELNVHRRTH), 418–440 (YSCSECGKSFPTSSEFTSHWKTH), 446–468 (FSCVQCGKCFSKDTHLKYHYRTH), 474–496 (FSCFECGKCFTHNGSLKVHLKIH), 618–640 (LSCSECGKCFSTYHVLARHQKTH), 646–668 (FSCSECEKCYARSSDLNVHRRTH), 674–696 (YSCSECGKCFTRSSDFNVHRRTH), 702–724 (YSCSECGRCFPTSSVLTSHWRTH), 730–752 (FSCTECGKCFSRETYLKYHHRTH), and 758–780 (FSCSECGKCFTCNSSLKVHFQLH).

Belongs to the krueppel C2H2-type zinc-finger protein family.

Its subcellular location is the nucleus. May be involved in transcriptional regulation. The protein is Oocyte zinc finger protein XlCOF8.4 of Xenopus laevis (African clawed frog).